A 379-amino-acid polypeptide reads, in one-letter code: Alcohol dehydrogenase class-2 isozyme 1 (379 aa).

Zn(2+) is bound by residues Cys47, His69, Cys99, Cys102, Cys105, Cys113, and Cys176. Residues 205-210, Asp229, Lys234, 298-300, and Arg374 contribute to the NAD(+) site; these read GLGGVG and VGV.

Belongs to the zinc-containing alcohol dehydrogenase family. Class-II subfamily. As to quaternary structure, homodimer. It depends on Zn(2+) as a cofactor.

Its subcellular location is the cytoplasm. It catalyses the reaction a primary alcohol + NAD(+) = an aldehyde + NADH + H(+). The catalysed reaction is a secondary alcohol + NAD(+) = a ketone + NADH + H(+). The protein is Alcohol dehydrogenase class-2 isozyme 1 (ADH2-1) of Oryctolagus cuniculus (Rabbit).